Consider the following 603-residue polypeptide: Geraniol synthase, chloroplastic (603 aa).

A chloroplast-targeting transit peptide spans 1-35; it reads MSSISQKVVIGLNKAAANNNLQNLDRRGFKTRCVS. (2E)-geranyl diphosphate contacts are provided by Arg319, Asp356, Asp360, Arg497, and Asp500. Mg(2+) contacts are provided by Asp356 and Asp360. Residues 356–360 carry the DDXXD motif motif; that stretch reads DDVYD. 3 residues coordinate Mg(2+): Asp500, Thr504, and Glu508.

It belongs to the terpene synthase family. Tpsb subfamily. In terms of assembly, monomer. Mg(2+) is required as a cofactor. It depends on Mn(2+) as a cofactor.

The protein resides in the plastid. It is found in the chloroplast. The enzyme catalyses (2E)-geranyl diphosphate + H2O = (2E)-geraniol + diphosphate. It functions in the pathway secondary metabolite biosynthesis; terpenoid biosynthesis. Monoterpene synthase (mono-TPS) involved in the biosynthesis of monoterpenes natural products. Catalyzes the conversion of (2E)-geranyl diphosphate (GPP) into geraniol. This Perilla frutescens var. hirtella (Perilla citriodora) protein is Geraniol synthase, chloroplastic.